The primary structure comprises 367 residues: Alanine racemase (367 aa).

The active-site Proton acceptor; specific for D-alanine is Lys40. Lys40 is modified (N6-(pyridoxal phosphate)lysine). Substrate is bound at residue Arg136. Residue Tyr263 is the Proton acceptor; specific for L-alanine of the active site. Met310 lines the substrate pocket.

This sequence belongs to the alanine racemase family. Pyridoxal 5'-phosphate serves as cofactor.

It carries out the reaction L-alanine = D-alanine. It participates in amino-acid biosynthesis; D-alanine biosynthesis; D-alanine from L-alanine: step 1/1. In terms of biological role, catalyzes the interconversion of L-alanine and D-alanine. May also act on other amino acids. The chain is Alanine racemase (alr) from Streptococcus thermophilus (strain ATCC BAA-491 / LMD-9).